The sequence spans 206 residues: HTH-type transcriptional regulator Hpr (206 aa).

The HTH marR-type domain occupies 13 to 157 (ALLFSQRMAQ…MMSIIRHIYG (145 aa)). The segment at residues 63-86 (ISEIAKFGVMHVSTAFNFSKKLEE) is a DNA-binding region (H-T-H motif). A disordered region spans residues 177–206 (SEEGKMKKKQEAKEAGESIEVDKPLEPLKN). The segment covering 178 to 206 (EEGKMKKKQEAKEAGESIEVDKPLEPLKN) has biased composition (basic and acidic residues).

As to quaternary structure, homodimer.

Its function is as follows. Negative regulator of protease production and sporulation. This Bacillus licheniformis (strain ATCC 14580 / DSM 13 / JCM 2505 / CCUG 7422 / NBRC 12200 / NCIMB 9375 / NCTC 10341 / NRRL NRS-1264 / Gibson 46) protein is HTH-type transcriptional regulator Hpr.